We begin with the raw amino-acid sequence, 274 residues long: Undecaprenyl-diphosphatase (274 aa).

A run of 8 helical transmembrane segments spans residues 6-26, 45-65, 94-114, 117-137, 155-174, 191-211, 223-243, and 253-273; these read SLFI…LPVS, AKTF…VMFW, GHIL…HDVI, LFAP…LLAA, YRQA…PGFS, YAAA…ASGL, GDLP…LIAI, and ISFV…YMVF.

It belongs to the UppP family.

The protein localises to the cell inner membrane. It catalyses the reaction di-trans,octa-cis-undecaprenyl diphosphate + H2O = di-trans,octa-cis-undecaprenyl phosphate + phosphate + H(+). Its function is as follows. Catalyzes the dephosphorylation of undecaprenyl diphosphate (UPP). Confers resistance to bacitracin. This chain is Undecaprenyl-diphosphatase, found in Serratia proteamaculans (strain 568).